The primary structure comprises 366 residues: Chorismate synthase (366 aa).

The NADP(+) site is built by arginine 48 and arginine 54. Residues 125–127 (RSS), 238–239 (NA), glycine 278, 293–297 (KPTSS), and arginine 319 each bind FMN.

Belongs to the chorismate synthase family. Homotetramer. FMNH2 is required as a cofactor.

The catalysed reaction is 5-O-(1-carboxyvinyl)-3-phosphoshikimate = chorismate + phosphate. It participates in metabolic intermediate biosynthesis; chorismate biosynthesis; chorismate from D-erythrose 4-phosphate and phosphoenolpyruvate: step 7/7. Its function is as follows. Catalyzes the anti-1,4-elimination of the C-3 phosphate and the C-6 proR hydrogen from 5-enolpyruvylshikimate-3-phosphate (EPSP) to yield chorismate, which is the branch point compound that serves as the starting substrate for the three terminal pathways of aromatic amino acid biosynthesis. This reaction introduces a second double bond into the aromatic ring system. This is Chorismate synthase from Burkholderia ambifaria (strain ATCC BAA-244 / DSM 16087 / CCUG 44356 / LMG 19182 / AMMD) (Burkholderia cepacia (strain AMMD)).